The following is a 172-amino-acid chain: Transcriptional activator protein (172 aa).

A Nuclear localization signal motif is present at residues 56 to 71; it reads KAQHRIAKHKAIRRRR. A zinc finger spans residues 76 to 93; that stretch reads CGCSIFYHIKCADHGFTH. The disordered stretch occupies residues 119 to 172; it reads DHAGGRSSIHTDKDIPHPNQVQSQPQESTGSPQSIPELPSLDDIDSSFWDDIFK. The span at 137-152 shows a compositional bias: polar residues; sequence NQVQSQPQESTGSPQS. Residues 158–172 form a transactivation region; sequence SLDDIDSSFWDDIFK.

The protein belongs to the geminiviridae transcriptional activator protein family. In terms of assembly, monomer. Homodimer. Homooligomer. Self-interaction correlates with nuclear localization and efficient activation of transcription. Monomers suppress local silencing by interacting with and inactivating host adenosine kinase 2 (ADK2) in the cytoplasm. Interacts with and inhibits host SNF1 kinase. Binds to ssDNA. Phosphorylated.

The protein localises to the host nucleus. It localises to the host cytoplasm. Strong activator of the late viral genes promoters. Enhances the expression of the capsid protein and nuclear shuttle protein. Acts as a suppressor of RNA-mediated gene silencing, also known as post-transcriptional gene silencing (PTGS), a mechanism of plant viral defense that limits the accumulation of viral RNAs. Suppresses the host RNA silencing by inhibiting adenosine kinase 2 (ADK2), a kinase involved in a general methylation pathway. Also suppresses the host basal defense by interacting with and inhibiting SNF1 kinase, a key regulator of cell metabolism implicated in innate antiviral defense. Determines pathogenicity. This chain is Transcriptional activator protein, found in Bean golden yellow mosaic virus (isolate Puerto Rico) (BGYMV).